Here is a 155-residue protein sequence, read N- to C-terminus: Protein-export protein SecB (155 aa).

It belongs to the SecB family. In terms of assembly, homotetramer, a dimer of dimers. One homotetramer interacts with 1 SecA dimer.

The protein localises to the cytoplasm. One of the proteins required for the normal export of preproteins out of the cell cytoplasm. It is a molecular chaperone that binds to a subset of precursor proteins, maintaining them in a translocation-competent state. It also specifically binds to its receptor SecA. This Escherichia coli O127:H6 (strain E2348/69 / EPEC) protein is Protein-export protein SecB.